Here is a 293-residue protein sequence, read N- to C-terminus: Acetyl-coenzyme A carboxylase carboxyl transferase subunit beta (293 aa).

The 265-residue stretch at 29 to 293 folds into the CoA carboxyltransferase N-terminal domain; sequence LWSKCPECGL…GCRPMEITSA (265 aa). The Zn(2+) site is built by Cys-33, Cys-36, Cys-52, and Cys-55. The C4-type zinc finger occupies 33–55; sequence CPECGLVVYVKDLKGNASVCAGC.

Belongs to the AccD/PCCB family. As to quaternary structure, acetyl-CoA carboxylase is a heterohexamer composed of biotin carboxyl carrier protein (AccB), biotin carboxylase (AccC) and two subunits each of ACCase subunit alpha (AccA) and ACCase subunit beta (AccD). It depends on Zn(2+) as a cofactor.

Its subcellular location is the cytoplasm. It catalyses the reaction N(6)-carboxybiotinyl-L-lysyl-[protein] + acetyl-CoA = N(6)-biotinyl-L-lysyl-[protein] + malonyl-CoA. Its pathway is lipid metabolism; malonyl-CoA biosynthesis; malonyl-CoA from acetyl-CoA: step 1/1. In terms of biological role, component of the acetyl coenzyme A carboxylase (ACC) complex. Biotin carboxylase (BC) catalyzes the carboxylation of biotin on its carrier protein (BCCP) and then the CO(2) group is transferred by the transcarboxylase to acetyl-CoA to form malonyl-CoA. The chain is Acetyl-coenzyme A carboxylase carboxyl transferase subunit beta from Parasynechococcus marenigrum (strain WH8102).